A 61-amino-acid polypeptide reads, in one-letter code: Toxin S5C1 (61 aa).

Disulfide bonds link cysteine 3–cysteine 22, cysteine 16–cysteine 39, cysteine 41–cysteine 53, and cysteine 54–cysteine 59. The Cell attachment site motif lies at 45–47 (RGD).

Belongs to the three-finger toxin family. Short-chain subfamily. Antiplatelet toxin sub-subfamily. As to expression, expressed by the venom gland.

It localises to the secreted. Inhibits ADP-induced platelet aggregation and inhibits the binding of purified platelet fibrinogen receptor alpha-IIb/beta-3 (ITGA2B/ITGB3) to immobilized fibrinogen. This is Toxin S5C1 from Dendroaspis jamesoni kaimosae (Eastern Jameson's mamba).